Reading from the N-terminus, the 245-residue chain is 4-hydroxy-tetrahydrodipicolinate reductase (245 aa).

Residues 7 to 12, 75 to 77, and 102 to 105 contribute to the NAD(+) site; these read GAKGKV, GTT, and APNF. His-132 (proton donor/acceptor) is an active-site residue. Residue His-133 coordinates (S)-2,3,4,5-tetrahydrodipicolinate. Lys-136 acts as the Proton donor in catalysis. (S)-2,3,4,5-tetrahydrodipicolinate is bound at residue 142-143; sequence GT.

This sequence belongs to the DapB family.

Its subcellular location is the cytoplasm. The catalysed reaction is (S)-2,3,4,5-tetrahydrodipicolinate + NAD(+) + H2O = (2S,4S)-4-hydroxy-2,3,4,5-tetrahydrodipicolinate + NADH + H(+). It carries out the reaction (S)-2,3,4,5-tetrahydrodipicolinate + NADP(+) + H2O = (2S,4S)-4-hydroxy-2,3,4,5-tetrahydrodipicolinate + NADPH + H(+). It participates in amino-acid biosynthesis; L-lysine biosynthesis via DAP pathway; (S)-tetrahydrodipicolinate from L-aspartate: step 4/4. Its function is as follows. Catalyzes the conversion of 4-hydroxy-tetrahydrodipicolinate (HTPA) to tetrahydrodipicolinate. This is 4-hydroxy-tetrahydrodipicolinate reductase from Mycobacterium bovis (strain BCG / Pasteur 1173P2).